We begin with the raw amino-acid sequence, 206 residues long: Putative 3-methyladenine DNA glycosylase (206 aa).

It belongs to the DNA glycosylase MPG family.

This Staphylococcus carnosus (strain TM300) protein is Putative 3-methyladenine DNA glycosylase.